Consider the following 403-residue polypeptide: Putative F-box protein At5g41500 (403 aa).

The 46-residue stretch at 2-47 (ATTISNLPRELIEEILSRVPLRAMKAMRLTCKSWNNLSKSESFMKM) folds into the F-box domain.

The sequence is that of Putative F-box protein At5g41500 from Arabidopsis thaliana (Mouse-ear cress).